The chain runs to 240 residues: MKPAYFISDLHLSEKHPELTALLLRFLRSSAAGQARAVYILGDLFDFWVGDDEVSELNTSVAREIRKLSDKGVAVFFVRGNRDFLIGQDFCRQAGMTLLPDYSVLDLFGCKTLICHGDTLCTDDRAYQRFRKIVHRKRLQKLFLMLPLKWRTRLAAKIRRVSKMEKQVKPADIMDVNAAFTARQVRAFNAERLIHGHTHREHIHHENGFTRIVLGDWHNDYASILRVDGDGAVFVPLEKY.

Mn(2+) contacts are provided by D9, H11, D43, N81, and H116. 81 to 82 contacts substrate; sequence NR. Positions 124, 162, 166, 169, and 197 each coordinate substrate. Mn(2+) is bound by residues H197 and H199.

It belongs to the LpxH family. Mn(2+) serves as cofactor.

It localises to the cell inner membrane. The enzyme catalyses UDP-2-N,3-O-bis[(3R)-3-hydroxytetradecanoyl]-alpha-D-glucosamine + H2O = 2-N,3-O-bis[(3R)-3-hydroxytetradecanoyl]-alpha-D-glucosaminyl 1-phosphate + UMP + 2 H(+). The protein operates within glycolipid biosynthesis; lipid IV(A) biosynthesis; lipid IV(A) from (3R)-3-hydroxytetradecanoyl-[acyl-carrier-protein] and UDP-N-acetyl-alpha-D-glucosamine: step 4/6. Its function is as follows. Hydrolyzes the pyrophosphate bond of UDP-2,3-diacylglucosamine to yield 2,3-diacylglucosamine 1-phosphate (lipid X) and UMP by catalyzing the attack of water at the alpha-P atom. Involved in the biosynthesis of lipid A, a phosphorylated glycolipid that anchors the lipopolysaccharide to the outer membrane of the cell. The polypeptide is UDP-2,3-diacylglucosamine hydrolase (Neisseria meningitidis serogroup C (strain 053442)).